Reading from the N-terminus, the 489-residue chain is Endothelial zinc finger protein induced by tumor necrosis factor alpha (489 aa).

A compositionally biased stretch (basic and acidic residues) spans 1–15 (MKELDPKNDISEDKL). Disordered regions lie at residues 1–61 (MKEL…PLGI) and 98–122 (EKGA…KPPM). 13 C2H2-type zinc fingers span residues 130-152 (YDCS…QRIH), 158-180 (FECD…QRVH), 186-208 (YACG…QRTH), 214-236 (YVCD…ERIH), 242-264 (YACG…QRTH), 270-292 (YVCP…QRTH), 298-320 (YACK…QRNH), 326-348 (YVCG…QRFH), 354-376 (FECS…QRIH), 382-404 (YECY…QIVH), 410-432 (YVCG…QRIH), 438-460 (YRCG…QRIH), and 466-488 (YRCG…LRIH).

This sequence belongs to the krueppel C2H2-type zinc-finger protein family. In terms of tissue distribution, highly expressed in placenta, followed by brain, testis, pancreas, heart, small intestine, muscle, uterus, prostate and peripheral blood leukocytes. Not detected in liver, lung, colon, stomach, salivary and thyroid gland.

It is found in the nucleus. Functionally, may be involved in transcriptional regulation. This chain is Endothelial zinc finger protein induced by tumor necrosis factor alpha (ZNF71), found in Homo sapiens (Human).